The sequence spans 367 residues: Aminomethyltransferase (367 aa).

The protein belongs to the GcvT family. The glycine cleavage system is composed of four proteins: P, T, L and H.

The catalysed reaction is N(6)-[(R)-S(8)-aminomethyldihydrolipoyl]-L-lysyl-[protein] + (6S)-5,6,7,8-tetrahydrofolate = N(6)-[(R)-dihydrolipoyl]-L-lysyl-[protein] + (6R)-5,10-methylene-5,6,7,8-tetrahydrofolate + NH4(+). Its function is as follows. The glycine cleavage system catalyzes the degradation of glycine. This chain is Aminomethyltransferase, found in Parasynechococcus marenigrum (strain WH8102).